The following is a 573-amino-acid chain: Potassium-transporting ATPase potassium-binding subunit (573 aa).

10 consecutive transmembrane segments (helical) span residues 3 to 23 (AEGL…TPLL), 65 to 85 (GYTL…YALL), 136 to 156 (GLTV…VALI), 179 to 199 (LYVL…QGVP), 254 to 274 (LTNL…IYSF), 286 to 306 (ALWT…WWAE), 383 to 403 (AGLY…GLMV), 423 to 443 (VIAV…TTVV), 489 to 509 (GLGL…LAIA), and 531 to 551 (LFIT…FFPA).

The protein belongs to the KdpA family. The system is composed of three essential subunits: KdpA, KdpB and KdpC.

Its subcellular location is the cell inner membrane. Its function is as follows. Part of the high-affinity ATP-driven potassium transport (or Kdp) system, which catalyzes the hydrolysis of ATP coupled with the electrogenic transport of potassium into the cytoplasm. This subunit binds the periplasmic potassium ions and delivers the ions to the membrane domain of KdpB through an intramembrane tunnel. The chain is Potassium-transporting ATPase potassium-binding subunit from Rhodospirillum centenum (strain ATCC 51521 / SW).